The primary structure comprises 514 residues: Ras-GEF domain-containing family member 1B-A (514 aa).

The N-terminal Ras-GEF domain maps to 76–206 (HDNNLISGSL…MTQTLIRKLT (131 aa)). Residues 246-494 (DPFTLAQQLT…YLASYESEGP (249 aa)) form the Ras-GEF domain.

In terms of tissue distribution, detected in oocytes, and in embryos at 4 to 120 hours post-fertilization (hpf). Detected along marginal blastomeres at early epiboly stage and throughout the margin at the onset of gastrulation. At 60% epiboly, strongest expression is found in the dorsal shield region and is restricted to the epiblast. Detected in the anterior border of the presomitic mesoderm at the end of epiboly. Detected in adaxial cells, in the somites and in the nervous system during somitogenesis. Detected in diencephalon and hindbrain and in cells surrounding the notochord, including adaxial cells and ventral mesendoderm, in 15-somite stage embryos. At 48 hpf, detected mainly in the brain.

Guanine nucleotide exchange factor (GEF) for Ras family proteins (in vitro). The chain is Ras-GEF domain-containing family member 1B-A (rasgef1ba) from Danio rerio (Zebrafish).